Here is a 366-residue protein sequence, read N- to C-terminus: Class I histocompatibility antigen, Gogo-C*0202 alpha chain (366 aa).

The signal sequence occupies residues Met-1–Ala-24. The segment at Gly-25–Asp-114 is alpha-1. The Extracellular segment spans residues Gly-25–Ile-308. Asn-110 is a glycosylation site (N-linked (GlcNAc...) asparagine). Residues Gly-115–Ala-206 are alpha-2. 2 disulfides stabilise this stretch: Cys-125–Cys-188 and Cys-227–Cys-283. The alpha-3 stretch occupies residues Glu-207–Trp-298. The region spanning Pro-209–Arg-297 is the Ig-like C1-type domain. A connecting peptide region spans residues Glu-299 to Ile-308. A helical membrane pass occupies residues Val-309–Met-332. Over Cys-333–Ala-366 the chain is Cytoplasmic.

The protein belongs to the MHC class I family. Heterodimer of an alpha chain and a beta chain (beta-2-microglobulin).

It localises to the membrane. Functionally, involved in the presentation of foreign antigens to the immune system. The sequence is that of Class I histocompatibility antigen, Gogo-C*0202 alpha chain from Gorilla gorilla gorilla (Western lowland gorilla).